The following is a 104-amino-acid chain: Pole-localizer protein TmaR (104 aa).

2 coiled-coil regions span residues 13–43 (RKNK…NLLD) and 76–96 (SAEI…LTEE).

This sequence belongs to the pole-localizer TmaR family.

It is found in the cytoplasm. Its function is as follows. Pole-localizer protein involved in the regulation of several cellular processes. This Vibrio vulnificus (strain CMCP6) protein is Pole-localizer protein TmaR.